The sequence spans 123 residues: Protein crumbs homolog 3 (123 aa).

A signal peptide spans 1 to 26 (MASPGLGLLLALGLPLLPARWGRAWG). Topologically, residues 27–59 (QTLDPHVNENGTITPSAPGSGSNGALSQEAITA) are extracellular. An N-linked (GlcNAc...) asparagine glycan is attached at Asn-36. A helical membrane pass occupies residues 60 to 80 (IIVVFSLLAAVLLAVGLVLLL). At 81 to 120 (RKLREKRQTQGTYRPSSEEQFNHAAEARAPQDSKETVRGC) the chain is on the cytoplasmic side. The tract at residues 87–123 (RQTQGTYRPSSEEQFNHAAEARAPQDSKETVRGCLPI) is disordered. The span at 96-117 (SSEEQFNHAAEARAPQDSKETV) shows a compositional bias: basic and acidic residues. Residues 119–123 (GCLPI) carry the PDZ-binding motif.

Component of a complex composed of CRB3, PALS1 and PATJ. Interacts (via C-terminus) with PALS1 (via PDZ domain). Interacts with PARD6A. Interacts (via intracellular domain) with EPB41L5. Interacts with WDR83.

Its subcellular location is the apical cell membrane. It localises to the cell junction. It is found in the tight junction. Functionally, involved in the establishment of cell polarity in mammalian epithelial cells. Regulates the morphogenesis of tight junctions. Involved in promoting phosphorylation and cytoplasmic retention of transcriptional coactivators YAP1 and WWTR1/TAZ which leads to suppression of TGFB1-dependent transcription of target genes such as CCN2/CTGF, SERPINE1/PAI1, SNAI1/SNAIL1 and SMAD7. The chain is Protein crumbs homolog 3 from Canis lupus familiaris (Dog).